A 201-amino-acid chain; its full sequence is Small ribosomal subunit protein uS4 (201 aa).

The S4 RNA-binding domain occupies 91–157; that stretch reads SRLDNVIYRA…VPFQIARETV (67 aa).

This sequence belongs to the universal ribosomal protein uS4 family. Part of the 30S ribosomal subunit. Contacts protein S5. The interaction surface between S4 and S5 is involved in control of translational fidelity.

One of the primary rRNA binding proteins, it binds directly to 16S rRNA where it nucleates assembly of the body of the 30S subunit. In terms of biological role, with S5 and S12 plays an important role in translational accuracy. The sequence is that of Small ribosomal subunit protein uS4 from Mycobacterium leprae (strain Br4923).